Here is a 918-residue protein sequence, read N- to C-terminus: Importin subunit beta-2 (918 aa).

HEAT repeat units follow at residues 11 to 38, 43 to 92, 103 to 137, 145 to 181, 190 to 222, 235 to 263, 275 to 303, 320 to 413, 421 to 449, 461 to 488, 501 to 534, 542 to 577, 583 to 620, 628 to 678, 694 to 725, 777 to 814, 825 to 858, and 867 to 900; these read YVLQLATLLQNCMSPNPEIRNNAMEAME, QPEF…GGNN, YVKSNIIHGLYNSNNNLVSNVTGIVITTLFSTYYR, GLQMLYQLLELTSNGNEPSIKALSKIMEDSAQFFQLE, EALLDSFFRFISNPNFSPVIRSESVKCINTVIP, FLEIIFQLAQNDENDLVRAQICISFSFLL, DGIVQFMLHLITTVNEEKVAIEACEFLHA, KDIV…MTNI, IAFPFLREHLGSDRWFIREATILALGAMA, PALIPFLVEQLNDKWAPVRKMTCWTLSR, LIPVLEPIINTLMDKKKDVQEAAISSVAVFIENA, LFYSQLLTSFDKCLKYYKKKNLIILYDAIGRFAEKC, AMQIILPPLIEKWALLSDSDKELWPLLECLSCVASSLG, PEVY…GLGA, ILKIMLECLQDPVHEVRQSCFALLGDIVYFFN, IDMSRIILDLFTTNTQIVDSSVMENLSVTIGKMGLTHP, DSNWNKWCLSVNALDDVEEKSSAYMGFLKIINLT, and DTIHKIVTGLSSNVEANVFAQEIYTFLMNHSAQI. Positions 361–395 are disordered; sequence APRIVKKKEAGNGEDADDNEDDDDDDDDEDGDVDT. Over residues 372 to 393 the composition is skewed to acidic residues; sequence NGEDADDNEDDDDDDDDEDGDV.

The protein belongs to the importin beta family. Importin beta-2 subfamily. Interacts with Ran (GSP1); interacts specifically with the GTP-bound form of Ran (GTP-Ran), protecting it from GTP hydrolysis and nucleotide exchange. Interacts with nucleoporins NUP1, NUP100 and NUP116. Interacts with NAB2 and HRP1/NAB4; via their rg-NLS. Interacts with TFG2; via its PY-NLS.

It is found in the cytoplasm. The protein localises to the nucleus. The protein resides in the nuclear pore complex. Functions in nuclear protein import as nuclear transport receptor. Serves as receptor for arginine/glycine-rich nuclear localization signals (rg-NLS) and PY-NLS in cargo substrates. Its predominant cargo substrate seems to be mRNA-binding proteins. Required for nuclear transport of NAB2, HRP1/NAB4 and TFG2. Mediates docking of the importin/substrate complex to the nuclear pore complex (NPC) through binding to repeat-containing nucleoporins. The complex is subsequently translocated through the pore by an energy requiring, Ran-dependent mechanism. At the nucleoplasmic side of the NPC, GTP-Ran binding leads to release of the cargo. Efficient GTP-Ran-mediated substrate release requires RNA. The importin is re-exported from the nucleus to the cytoplasm where GTP hydrolysis releases Ran from importin. The directionality of nuclear import is thought to be conferred by an asymmetric distribution of the GTP- and GDP-bound forms of Ran between the cytoplasm and nucleus. The protein is Importin subunit beta-2 of Saccharomyces cerevisiae (strain ATCC 204508 / S288c) (Baker's yeast).